The sequence spans 20 residues: Cytochrome P450 3A5 (20 aa).

This sequence belongs to the cytochrome P450 family. Requires heme as cofactor.

It is found in the endoplasmic reticulum membrane. The protein resides in the microsome membrane. It carries out the reaction an organic molecule + reduced [NADPH--hemoprotein reductase] + O2 = an alcohol + oxidized [NADPH--hemoprotein reductase] + H2O + H(+). Functionally, 6-beta-testosterone hydroxylase. This chain is Cytochrome P450 3A5, found in Papio sp. (Baboon).